Here is a 270-residue protein sequence, read N- to C-terminus: Interleukin-33 (270 aa).

A homeodomain-like HTH domain region spans residues 1–65 (MKPKMKYSTN…EACYFRRETT (65 aa)). A propeptide spanning residues 1–94 (MKPKMKYSTN…CQQQSTVESF (94 aa)) is cleaved from the precursor. Positions 64-111 (TTKRPSLKTDRKHKRHLVLAACQQQSTVESFAFGISGVQKYTRALHDS) are interaction with RELA.

Belongs to the IL-1 family. Highly divergent. In terms of assembly, forms a 1:1:1 heterotrimeric complex with its primary high-affinity receptor IL1RL1 and the coreceptor IL1RAP. Interacts with cargo receptor TMED10; the interaction mediates the translocation from the cytoplasm into the ERGIC (endoplasmic reticulum-Golgi intermediate compartment) and thereby secretion. Post-translationally, the full-length protein can be released from cells and is able to signal via the IL1RL1/ST2 receptor. However, proteolytic processing by CELA1, CSTG/cathepsin G and ELANE/neutrophil elastase produces C-terminal peptides that are more active than the unprocessed full-length protein. May also be proteolytically processed by calpains. Proteolytic cleavage mediated by apoptotic caspases including CASP3 and CASP7 results in IL33 inactivation. In vitro proteolytic cleavage by CASP1 was reported but could not be confirmed in vivo suggesting that IL33 is probably not a direct substrate for that caspase.

The protein localises to the nucleus. It is found in the chromosome. Its subcellular location is the cytoplasm. The protein resides in the cytoplasmic vesicle. It localises to the secretory vesicle. The protein localises to the secreted. In terms of biological role, cytokine that binds to and signals through the IL1RL1/ST2 receptor which in turn activates NF-kappa-B and MAPK signaling pathways in target cells. Involved in the maturation of Th2 cells inducing the secretion of T-helper type 2-associated cytokines. Also involved in activation of mast cells, basophils, eosinophils and natural killer cells. Acts as a chemoattractant for Th2 cells, and may function as an 'alarmin', that amplifies immune responses during tissue injury. Induces rapid UCP2-dependent mitochondrial rewiring that attenuates the generation of reactive oxygen species and preserves the integrity of Krebs cycle required for persistent production of itaconate and subsequent GATA3-dependent differentiation of inflammation-resolving alternatively activated macrophages. Its function is as follows. In quiescent endothelia the uncleaved form is constitutively and abundantly expressed, and acts as a chromatin-associated nuclear factor with transcriptional repressor properties, it may sequester nuclear NF-kappaB/RELA, lowering expression of its targets. This form is rapidely lost upon angiogenic or pro-inflammatory activation. The chain is Interleukin-33 (IL33) from Pongo abelii (Sumatran orangutan).